We begin with the raw amino-acid sequence, 525 residues long: Sucrose transport protein (525 aa).

Residues 1 to 37 lie on the Cytoplasmic side of the membrane; it reads MAGRNIKNGENNKIAGSSLHLEKNPTTPPEAEATLKK. The next 12 helical transmembrane spans lie at 38–58, 72–92, 107–127, 145–165, 184–204, 230–250, 295–315, 338–358, 373–393, 422–442, 455–475, and 488–508; these read LGLVASVAAGVQFGWALQLSL, WAAYIWLCGPISGMIVQPLVG, PFIAAGAALVAVAVGLIGFAA, AIAVFVVGFWILDVANNTLQG, YANAFFSFFMALGNIGGYAAG, SCFFISITLLIVLTILALSVV, MLILLLVTALNWIAWFPFLLF, GVHAGALGLMINSVVLGVMSL, LWGIVNIILAVCLAMTVLVTK, LAIFAVLGIPLAITFSIPFAL, GLSLGVLNLAIVVPQMFVSVT, and LPAFVVGAVAATASAVLSFTL. Residues 509–525 lie on the Cytoplasmic side of the membrane; the sequence is LPSPPPEAKIGGSMGGH.

It belongs to the glycoside-pentoside-hexuronide (GPH) cation symporter transporter (TC 2.A.2.4) family.

The protein localises to the membrane. The protein operates within glycan biosynthesis; sucrose metabolism. Its function is as follows. Responsible for the transport of sucrose into the cell, with the concomitant uptake of protons (symport system). Can also transport maltose at a lesser rate. In Spinacia oleracea (Spinach), this protein is Sucrose transport protein.